Here is a 380-residue protein sequence, read N- to C-terminus: Succinate--CoA ligase [ADP-forming] subunit beta (380 aa).

The ATP-grasp domain maps to 9-237 (RDLLARFGIP…PSAEPEAERR (229 aa)). ATP-binding positions include Lys45, 52–54 (GRG), Val94, and Glu99. Positions 192 and 206 each coordinate Mg(2+). Residues Asn257 and 314 to 316 (GIT) contribute to the substrate site.

This sequence belongs to the succinate/malate CoA ligase beta subunit family. As to quaternary structure, heterotetramer of two alpha and two beta subunits. Mg(2+) serves as cofactor.

The catalysed reaction is succinate + ATP + CoA = succinyl-CoA + ADP + phosphate. The enzyme catalyses GTP + succinate + CoA = succinyl-CoA + GDP + phosphate. The protein operates within carbohydrate metabolism; tricarboxylic acid cycle; succinate from succinyl-CoA (ligase route): step 1/1. Functionally, succinyl-CoA synthetase functions in the citric acid cycle (TCA), coupling the hydrolysis of succinyl-CoA to the synthesis of either ATP or GTP and thus represents the only step of substrate-level phosphorylation in the TCA. The beta subunit provides nucleotide specificity of the enzyme and binds the substrate succinate, while the binding sites for coenzyme A and phosphate are found in the alpha subunit. This is Succinate--CoA ligase [ADP-forming] subunit beta from Chloroflexus aurantiacus (strain ATCC 29366 / DSM 635 / J-10-fl).